The sequence spans 398 residues: Protein CDKN2AIP homolog A (398 aa).

Positions 19–124 (LELVHGECES…KVKKRGISSS (106 aa)) constitute an XRN2-binding (XTBD) domain. Residues 118–245 (KRGISSSNEG…SDNALKPTRR (128 aa)) are disordered. Residues 131–147 (EPCKKQKSSDHGERESS) are compositionally biased toward basic and acidic residues. Polar residues-rich tracts occupy residues 154–163 (SDGNVPSTSL), 189–199 (RRSLPVSNAKS), and 226–238 (QTSM…SSDN).

Belongs to the CARF family.

The protein resides in the nucleus. It localises to the nucleoplasm. In terms of biological role, may regulate DNA damage response and cell proliferation. The chain is Protein CDKN2AIP homolog A (cdkn2aip-a) from Xenopus laevis (African clawed frog).